Reading from the N-terminus, the 165-residue chain is Transcriptional repressor NrdR (165 aa).

The segment at 3 to 34 is a zinc-finger region; that stretch reads CPFCGAQDTRVVDSRLSHEGDQVRRRRECGEC. One can recognise an ATP-cone domain in the interval 49–139; it reads PRVVKSDGSR…VYRRFEDVNQ (91 aa).

Belongs to the NrdR family. Zn(2+) is required as a cofactor.

In terms of biological role, negatively regulates transcription of bacterial ribonucleotide reductase nrd genes and operons by binding to NrdR-boxes. This is Transcriptional repressor NrdR from Methylococcus capsulatus (strain ATCC 33009 / NCIMB 11132 / Bath).